Here is a 382-residue protein sequence, read N- to C-terminus: Mannitol-1-phosphate 5-dehydrogenase (382 aa).

NAD(+) is bound at residue 4–15; the sequence is AVHFGAGNIGRG.

This sequence belongs to the mannitol dehydrogenase family. Monomer.

The enzyme catalyses D-mannitol 1-phosphate + NAD(+) = beta-D-fructose 6-phosphate + NADH + H(+). In Streptococcus mutans serotype c (strain ATCC 700610 / UA159), this protein is Mannitol-1-phosphate 5-dehydrogenase (mtlD).